Reading from the N-terminus, the 570-residue chain is Sulfite reductase [NADPH] hemoprotein beta-component (570 aa).

[4Fe-4S] cluster contacts are provided by cysteine 434, cysteine 440, cysteine 479, and cysteine 483. A siroheme-binding site is contributed by cysteine 483.

The protein belongs to the nitrite and sulfite reductase 4Fe-4S domain family. In terms of assembly, alpha(8)-beta(8). The alpha component is a flavoprotein, the beta component is a hemoprotein. Siroheme serves as cofactor. It depends on [4Fe-4S] cluster as a cofactor.

It catalyses the reaction hydrogen sulfide + 3 NADP(+) + 3 H2O = sulfite + 3 NADPH + 4 H(+). The protein operates within sulfur metabolism; hydrogen sulfide biosynthesis; hydrogen sulfide from sulfite (NADPH route): step 1/1. Component of the sulfite reductase complex that catalyzes the 6-electron reduction of sulfite to sulfide. This is one of several activities required for the biosynthesis of L-cysteine from sulfate. This Klebsiella pneumoniae subsp. pneumoniae (strain ATCC 700721 / MGH 78578) protein is Sulfite reductase [NADPH] hemoprotein beta-component.